The primary structure comprises 126 residues: RutC family protein SSO3206 (126 aa).

The protein belongs to the RutC family.

In Saccharolobus solfataricus (strain ATCC 35092 / DSM 1617 / JCM 11322 / P2) (Sulfolobus solfataricus), this protein is RutC family protein SSO3206.